Consider the following 211-residue polypeptide: Thymidylate kinase (211 aa).

ATP is bound at residue 11-18; sequence GPDGAGKT.

It belongs to the thymidylate kinase family.

The enzyme catalyses dTMP + ATP = dTDP + ADP. Functionally, phosphorylation of dTMP to form dTDP in both de novo and salvage pathways of dTTP synthesis. This is Thymidylate kinase from Streptococcus pyogenes serotype M3 (strain ATCC BAA-595 / MGAS315).